A 158-amino-acid polypeptide reads, in one-letter code: Glycine-rich RNA-binding protein 2, mitochondrial (158 aa).

The transit peptide at 1-34 (MAFCNKLGGLLRQNISSNGNVPVTSMLGSLRLMS) directs the protein to the mitochondrion. The RRM domain occupies 35-113 (TKLFIGGLSW…RHIRVNPAND (79 aa)). Serine 43 is subject to Phosphoserine. A glycine-rich (GR) required for cell-to-cell movement region spans residues 122-157 (GGGGGYSGGGGGYGGGGGGYGGGGGGYGGGGDGGGG).

The protein belongs to the GR-RBP family. Binds to small phloem-mobile single-stranded RNAs (ss-sRNA, e.g. small interfering RNA (siRNA) and microRNA (miRNA)) in the phloeme exudate, including viral-derived sRNA (vsiRNA). Interacts with ORRM2, RBG3/ORRM3 and RBG5/ORRM4.

The protein localises to the mitochondrion. It localises to the secreted. Functionally, promotes the cis-splicing and editing of several mitochondrial RNAs (including NAD5 transcripts). Plays a role in RNA transcription or processing during stress. Binds RNAs and DNAs sequence with a preference to single-stranded nucleic acids. Displays strong affinity to poly(U) sequence. Exerts cold and freezing tolerance, probably by exhibiting an RNA chaperone activity during the cold and freezing adaptation process. Mediates cell-to-cell trafficking of RNA interference (RNAi) signals (small RNAs (sRNA), e.g. small interfering RNA (siRNA) and microRNA (miRNA)) which regulate growth and development, as well as responses to environmental inputs, including pathogen attack; can compromise zucchini yellow mosaic virus (ZYMV) and tobacco rattle virus (TRV) infections at the early stage. In Arabidopsis thaliana (Mouse-ear cress), this protein is Glycine-rich RNA-binding protein 2, mitochondrial.